A 461-amino-acid chain; its full sequence is D-phenylhydantoinase (461 aa).

A divalent metal cation is bound by residues His-59, His-61, and Lys-151. Lys-151 carries the post-translational modification N6-carboxylysine. Tyr-156 serves as a coordination point for substrate. A divalent metal cation contacts are provided by His-182 and His-239. Substrate is bound at residue Ser-286. Residue Asp-313 coordinates a divalent metal cation. Asn-335 is a substrate binding site.

It belongs to the metallo-dependent hydrolases superfamily. Hydantoinase/dihydropyrimidinase family. In terms of assembly, homotetramer. A divalent metal cation is required as a cofactor. Post-translationally, carboxylation allows a single lysine to coordinate two divalent metal cations.

The enzyme catalyses D-5-phenylhydantoin + H2O = N-carbamoyl-D-phenylglycine + H(+). Its function is as follows. Catalyzes the stereospecific hydrolysis of the cyclic amide bond of D-hydantoin derivatives with an aromatic side chains at the 5'-position. Has no activity on dihydropyrimidines. The physiological function is unknown. The sequence is that of D-phenylhydantoinase from Escherichia coli O81 (strain ED1a).